Here is a 153-residue protein sequence, read N- to C-terminus: Pheromone-binding protein Gp-9 (153 aa).

An N-terminal signal peptide occupies residues 1–19 (MKTFVLHIFIFALVAFASA). 3 disulfides stabilise this stretch: cysteine 37-cysteine 77, cysteine 73-cysteine 129, and cysteine 118-cysteine 138.

Belongs to the PBP/GOBP family. Homodimer.

The protein localises to the secreted. Its function is as follows. Colony queen number, a major feature of social organization, is associated with worker genotype for Gp-9. Colonies are headed by either a single reproductive queen (monogyne form) or multiple queens (polygyne form). Differences in worker Gp-9 genotypes between social forms may cause differences in workers' abilities to recognize queens and regulate their numbers. The sequence is that of Pheromone-binding protein Gp-9 from Solenopsis n. sp. (strain JP-2002) (Fire ant).